Reading from the N-terminus, the 581-residue chain is Proline--tRNA ligase (581 aa).

Belongs to the class-II aminoacyl-tRNA synthetase family. ProS type 1 subfamily. Homodimer.

It is found in the cytoplasm. The enzyme catalyses tRNA(Pro) + L-proline + ATP = L-prolyl-tRNA(Pro) + AMP + diphosphate. Its function is as follows. Catalyzes the attachment of proline to tRNA(Pro) in a two-step reaction: proline is first activated by ATP to form Pro-AMP and then transferred to the acceptor end of tRNA(Pro). As ProRS can inadvertently accommodate and process non-cognate amino acids such as alanine and cysteine, to avoid such errors it has two additional distinct editing activities against alanine. One activity is designated as 'pretransfer' editing and involves the tRNA(Pro)-independent hydrolysis of activated Ala-AMP. The other activity is designated 'posttransfer' editing and involves deacylation of mischarged Ala-tRNA(Pro). The misacylated Cys-tRNA(Pro) is not edited by ProRS. The sequence is that of Proline--tRNA ligase from Methylibium petroleiphilum (strain ATCC BAA-1232 / LMG 22953 / PM1).